The following is a 307-amino-acid chain: 2-carboxy-1,4-naphthoquinone phytyltransferase (307 aa).

Transmembrane regions (helical) follow at residues 27 to 47 (MYTVAVVPITVGSAVAYGLTG), 51 to 71 (GDVFTIFLLSAIAIIAWINLS), 98 to 118 (LVFLISNFFLLAGVLGLMSMS), 125 to 145 (TVLELIGVAIFLGYTYQGPPF), 147 to 167 (LGYLGLGELICLITFGPLAIA), 177 to 197 (FSWNLLTPSVFVGISTAIILF), 223 to 243 (LGSQVLTLSVVSLYLITAIGV), and 284 to 304 (FIAVNLHFFSGMLMAAGYGWA).

It belongs to the MenA family. Type 2 subfamily.

It localises to the cell inner membrane. It catalyses the reaction 2-carboxy-1,4-naphthoquinone + phytyl diphosphate + H(+) = demethylphylloquinone + CO2 + diphosphate. The protein operates within cofactor biosynthesis; phylloquinone biosynthesis. In terms of biological role, involved in the synthesis of phylloquinone (vitamin K1). Catalyzes the transfer of a prenyl chain to 2-carboxy-1,4-naphthoquinone. The chain is 2-carboxy-1,4-naphthoquinone phytyltransferase from Synechocystis sp. (strain ATCC 27184 / PCC 6803 / Kazusa).